Reading from the N-terminus, the 1394-residue chain is DNA-directed RNA polymerase subunit beta' (1394 aa).

Zn(2+) contacts are provided by cysteine 71, cysteine 73, cysteine 86, and cysteine 89. Residues aspartate 462, aspartate 464, and aspartate 466 each coordinate Mg(2+). The Zn(2+) site is built by cysteine 811, cysteine 885, cysteine 892, and cysteine 895.

This sequence belongs to the RNA polymerase beta' chain family. In terms of assembly, the RNAP catalytic core consists of 2 alpha, 1 beta, 1 beta' and 1 omega subunit. When a sigma factor is associated with the core the holoenzyme is formed, which can initiate transcription. It depends on Mg(2+) as a cofactor. Requires Zn(2+) as cofactor.

It catalyses the reaction RNA(n) + a ribonucleoside 5'-triphosphate = RNA(n+1) + diphosphate. Functionally, DNA-dependent RNA polymerase catalyzes the transcription of DNA into RNA using the four ribonucleoside triphosphates as substrates. The polypeptide is DNA-directed RNA polymerase subunit beta' (Xanthobacter autotrophicus (strain ATCC BAA-1158 / Py2)).